The primary structure comprises 178 residues: Protein Vhl (178 aa).

This sequence belongs to the VHL family. In terms of assembly, part of a complex with Cul2, Roc1a/Rbx1 and the elongin BC complex. Interacts with sima/Hif1a. Interacts with itself. Interacts with mgr and betaTub56D/tubulin beta-1 chain. Interacts with tubulin alpha-beta heterodimers by itself or in complex with mgr. Interacts with microtubules (MTs).

The protein operates within protein modification; protein ubiquitination. Functionally, involved in development of tracheal vasculature. Probably involved in halting cell migration at the end of vascular tube outgrowth. Possesses E3 ubiquitin ligase activity when in complex with Elongin BC complex, Cul2 and Rox1a/Rbx1, and can target sima/Hif1a for ubiquitination. May play a critical role in promoting microtubule stabilization when tubulins are correctly folded by the prefoldin complex. If tubulin is incorrectly folded, may promote its degradation. The sequence is that of Protein Vhl from Drosophila melanogaster (Fruit fly).